We begin with the raw amino-acid sequence, 256 residues long: Probable aquaporin TIP4-2 (256 aa).

A run of 5 helical transmembrane segments spans residues 25–45 (AVAG…ASTI), 59–79 (AVTA…TAGF), 86–108 (LNPA…SALY), 146–166 (GVAA…ATIL), and 178–198 (PLLT…LTGA). Residues 87–89 (NPA) carry the NPA 1 motif. An NPA 2 motif is present at residues 201 to 203 (NPA). Residues 220-240 (VYWVGPLAGGPLAVVAYELLF) traverse the membrane as a helical segment.

It belongs to the MIP/aquaporin (TC 1.A.8) family. TIP (TC 1.A.8.10) subfamily. Expressed in roots, leaves and anthers.

The protein resides in the vacuole membrane. Its function is as follows. Aquaporins facilitate the transport of water and small neutral solutes across cell membranes. May be involved in transport from the vacuolar compartment to the cytoplasm. The protein is Probable aquaporin TIP4-2 (TIP4-2) of Oryza sativa subsp. japonica (Rice).